A 337-amino-acid chain; its full sequence is Mitochondrial glutathione transporter SLC25A40 (337 aa).

3 Solcar repeats span residues 14 to 132 (VTPL…LSTF), 140 to 224 (NETR…LRRW), and 234 to 328 (STFM…GKGF). The next 6 membrane-spanning stretches (helical) occupy residues 20-40 (MMAS…LDVV), 104-124 (LWSG…IYFT), 146-166 (IVAG…LELI), 200-221 (WAPT…YENL), 240-260 (FTAG…FDVV), and 299-319 (GLFT…AIMI).

Belongs to the mitochondrial carrier (TC 2.A.29) family. In terms of tissue distribution, widely expressed at low level.

It is found in the mitochondrion inner membrane. The enzyme catalyses glutathione(in) = glutathione(out). Functionally, probable mitochondrial transporter required for glutathione import into mitochondria. Glutathione, which plays key roles in oxidative metabolism, is produced exclusively in the cytosol and is imported in many organelles. Mitochondrial glutathione is required for the activity and stability of proteins containing iron-sulfur clusters, as well as erythropoiesis. This is Mitochondrial glutathione transporter SLC25A40 from Rattus norvegicus (Rat).